The chain runs to 266 residues: Undecaprenyl-diphosphatase (266 aa).

Transmembrane regions (helical) follow at residues 41 to 61, 82 to 102, 106 to 126, 159 to 179, 191 to 211, 213 to 233, and 246 to 266; these read YAYSLGLFLEAASVLAALIYF, LVYILVTTLVTAVVGLPLYYV, WLVVGHSAGFLMIVLGLAVVL, AVSVLPGLSRSGATVTALLLL, FVLVPVAGLGATALAYLSEGG, VATAEALLAMAIGIVISIITI, and VLVNVVIGLLAIAGGLLRIIF.

The protein belongs to the UppP family.

The protein resides in the cell membrane. The catalysed reaction is di-trans,octa-cis-undecaprenyl diphosphate + H2O = di-trans,octa-cis-undecaprenyl phosphate + phosphate + H(+). In terms of biological role, catalyzes the dephosphorylation of undecaprenyl diphosphate (UPP). The sequence is that of Undecaprenyl-diphosphatase from Pyrobaculum aerophilum (strain ATCC 51768 / DSM 7523 / JCM 9630 / CIP 104966 / NBRC 100827 / IM2).